Reading from the N-terminus, the 418-residue chain is Gamma-glutamyl phosphate reductase (418 aa).

This sequence belongs to the gamma-glutamyl phosphate reductase family.

The protein resides in the cytoplasm. The enzyme catalyses L-glutamate 5-semialdehyde + phosphate + NADP(+) = L-glutamyl 5-phosphate + NADPH + H(+). It functions in the pathway amino-acid biosynthesis; L-proline biosynthesis; L-glutamate 5-semialdehyde from L-glutamate: step 2/2. Functionally, catalyzes the NADPH-dependent reduction of L-glutamate 5-phosphate into L-glutamate 5-semialdehyde and phosphate. The product spontaneously undergoes cyclization to form 1-pyrroline-5-carboxylate. The protein is Gamma-glutamyl phosphate reductase of Colwellia psychrerythraea (strain 34H / ATCC BAA-681) (Vibrio psychroerythus).